We begin with the raw amino-acid sequence, 261 residues long: MDPPLPSLHSPQWASLLQLHHGLMWLRRFAVLVRVYALVVFHIAISTAFCGMIWLGIPDSHNICQHESSPLLLVFAPSLLWCLVLIQGERHPDDVVLTMGYVGLLSVTTVFYTWCSDLPAILIDYTLVLTLWIACTGAVMVGDSFRAKRWELICSRVLTSVFFITLWVIGDQTVFHHQRILLYGYGAIVFLMMTVTFYGTRYIRDELPAAQTLRGSLLIYVGLVTMFKITLIVLSPNLWRLPWTTVFAAFRSSYCEGGGGS.

The next 7 helical transmembrane spans lie at 37–57, 68–88, 95–115, 121–141, 150–170, 180–200, and 215–235; these read ALVV…WLGI, SSPL…LIQG, VVLT…YTWC, ILID…AVMV, WELI…WVIG, ILLY…FYGT, and GSLL…IVLS.

The protein belongs to the cytomegalovirus US12 family.

Its subcellular location is the membrane. This is an uncharacterized protein from Homo sapiens (Human).